The following is a 325-amino-acid chain: GMP reductase (325 aa).

The active-site Thioimidate intermediate is the cysteine 174. Residue 203–226 (LIADGGIRTHGDIAKSIRFGASMV) participates in NADP(+) binding.

Belongs to the IMPDH/GMPR family. GuaC type 2 subfamily.

It carries out the reaction IMP + NH4(+) + NADP(+) = GMP + NADPH + 2 H(+). Its function is as follows. Catalyzes the irreversible NADPH-dependent deamination of GMP to IMP. It functions in the conversion of nucleobase, nucleoside and nucleotide derivatives of G to A nucleotides, and in maintaining the intracellular balance of A and G nucleotides. The polypeptide is GMP reductase (Staphylococcus aureus (strain NCTC 8325 / PS 47)).